Reading from the N-terminus, the 862-residue chain is Leucine--tRNA ligase (862 aa).

Residues 42–52 carry the 'HIGH' region motif; it reads PYPSGKIHIGH. Positions 614–618 match the 'KMSKS' region motif; it reads KMSKS. Lysine 617 provides a ligand contact to ATP.

Belongs to the class-I aminoacyl-tRNA synthetase family.

Its subcellular location is the cytoplasm. It carries out the reaction tRNA(Leu) + L-leucine + ATP = L-leucyl-tRNA(Leu) + AMP + diphosphate. The polypeptide is Leucine--tRNA ligase (Syntrophus aciditrophicus (strain SB)).